Consider the following 419-residue polypeptide: Serine hydroxymethyltransferase (419 aa).

Residues L121 and 125-127 contribute to the (6S)-5,6,7,8-tetrahydrofolate site; that span reads GHL. K229 is subject to N6-(pyridoxal phosphate)lysine. 354–356 is a (6S)-5,6,7,8-tetrahydrofolate binding site; that stretch reads SPF.

It belongs to the SHMT family. Homodimer. The cofactor is pyridoxal 5'-phosphate.

It localises to the cytoplasm. It catalyses the reaction (6R)-5,10-methylene-5,6,7,8-tetrahydrofolate + glycine + H2O = (6S)-5,6,7,8-tetrahydrofolate + L-serine. Its pathway is one-carbon metabolism; tetrahydrofolate interconversion. The protein operates within amino-acid biosynthesis; glycine biosynthesis; glycine from L-serine: step 1/1. Functionally, catalyzes the reversible interconversion of serine and glycine with tetrahydrofolate (THF) serving as the one-carbon carrier. This reaction serves as the major source of one-carbon groups required for the biosynthesis of purines, thymidylate, methionine, and other important biomolecules. Also exhibits THF-independent aldolase activity toward beta-hydroxyamino acids, producing glycine and aldehydes, via a retro-aldol mechanism. The protein is Serine hydroxymethyltransferase of Coxiella burnetii (strain CbuG_Q212) (Coxiella burnetii (strain Q212)).